The following is a 354-amino-acid chain: 3-dehydroquinate synthase (354 aa).

NAD(+) is bound by residues 66–71 (DGERYK), 100–104 (GVVGD), 124–125 (TT), lysine 137, and lysine 146. The Zn(2+) site is built by glutamate 179, histidine 242, and histidine 259.

The protein belongs to the sugar phosphate cyclases superfamily. Dehydroquinate synthase family. It depends on Co(2+) as a cofactor. Zn(2+) serves as cofactor. The cofactor is NAD(+).

The protein resides in the cytoplasm. It carries out the reaction 7-phospho-2-dehydro-3-deoxy-D-arabino-heptonate = 3-dehydroquinate + phosphate. It functions in the pathway metabolic intermediate biosynthesis; chorismate biosynthesis; chorismate from D-erythrose 4-phosphate and phosphoenolpyruvate: step 2/7. Catalyzes the conversion of 3-deoxy-D-arabino-heptulosonate 7-phosphate (DAHP) to dehydroquinate (DHQ). The sequence is that of 3-dehydroquinate synthase from Halorhodospira halophila (strain DSM 244 / SL1) (Ectothiorhodospira halophila (strain DSM 244 / SL1)).